A 206-amino-acid chain; its full sequence is Large ribosomal subunit protein uL4 (206 aa).

Belongs to the universal ribosomal protein uL4 family. In terms of assembly, part of the 50S ribosomal subunit.

Functionally, one of the primary rRNA binding proteins, this protein initially binds near the 5'-end of the 23S rRNA. It is important during the early stages of 50S assembly. It makes multiple contacts with different domains of the 23S rRNA in the assembled 50S subunit and ribosome. Forms part of the polypeptide exit tunnel. The sequence is that of Large ribosomal subunit protein uL4 from Xanthobacter autotrophicus (strain ATCC BAA-1158 / Py2).